Reading from the N-terminus, the 284-residue chain is Bifunctional protein FolD (284 aa).

NADP(+) contacts are provided by residues 166–168 (GRS) and serine 191.

This sequence belongs to the tetrahydrofolate dehydrogenase/cyclohydrolase family. In terms of assembly, homodimer.

It catalyses the reaction (6R)-5,10-methylene-5,6,7,8-tetrahydrofolate + NADP(+) = (6R)-5,10-methenyltetrahydrofolate + NADPH. It carries out the reaction (6R)-5,10-methenyltetrahydrofolate + H2O = (6R)-10-formyltetrahydrofolate + H(+). It participates in one-carbon metabolism; tetrahydrofolate interconversion. Catalyzes the oxidation of 5,10-methylenetetrahydrofolate to 5,10-methenyltetrahydrofolate and then the hydrolysis of 5,10-methenyltetrahydrofolate to 10-formyltetrahydrofolate. This chain is Bifunctional protein FolD, found in Delftia acidovorans (strain DSM 14801 / SPH-1).